The sequence spans 505 residues: Nicotinamide phosphoribosyltransferase (505 aa).

Arg-196 serves as a coordination point for diphosphate. Residue Asp-219 coordinates beta-nicotinamide D-ribonucleotide. Diphosphate-binding residues include His-246 and Arg-314. Residues 314–316 (RPD), 369–370 (GD), and Arg-408 each bind beta-nicotinamide D-ribonucleotide.

This sequence belongs to the NAPRTase family.

The catalysed reaction is beta-nicotinamide D-ribonucleotide + diphosphate = 5-phospho-alpha-D-ribose 1-diphosphate + nicotinamide + H(+). The protein operates within cofactor biosynthesis; NAD(+) biosynthesis; nicotinamide D-ribonucleotide from 5-phospho-alpha-D-ribose 1-diphosphate and nicotinamide: step 1/1. Its activity is regulated as follows. 10-fold more active in the presence of saturating ATP. Catalyzes the condensation of nicotinamide with 5-phosphoribosyl-1-pyrophosphate to yield nicotinamide mononucleotide, an intermediate in the biosynthesis of NAD. Functions in the nondeamidating salvage pathway for production of NAD from nicotinamide. Displays a strict preference for nicotinamide over nicotinate substrate. This is Nicotinamide phosphoribosyltransferase from Acinetobacter baylyi (strain ATCC 33305 / BD413 / ADP1).